The chain runs to 289 residues: Aquaporin-2 (289 aa).

Positions 1–36 are disordered; that stretch reads MSNESNDLEKNISHLDPTGVDNAYIPPEQPETKHSR. Residues 1-47 are Cytoplasmic-facing; the sequence is MSNESNDLEKNISHLDPTGVDNAYIPPEQPETKHSRFNIDRDTLRNH. A helical transmembrane segment spans residues 48–68; the sequence is FIAAVGEFCGTFMFLWCAYVI. Topologically, residues 69-90 are extracellular; it reads CNVANHDVALTTEPEGSHPGQL. The chain crosses the membrane as a helical span at residues 91-111; the sequence is IMIALGFGFSVMFSIWCFAGV. Residues 112-135 lie on the Cytoplasmic side of the membrane; the sequence is SGGALNPAVSLSLCLARAISPARC. The NPA 1 signature appears at 117-119; that stretch reads NPA. Residues 136-156 form a helical membrane-spanning segment; that stretch reads VVMWFPQIIAGMAAGGAASAM. Topologically, residues 157-175 are extracellular; it reads TPGKVLFTNALGLGCSRSR. The chain crosses the membrane as a helical span at residues 176–196; sequence GLFLEMFGTAVLCLTVLMTAV. Residues 197 to 202 lie on the Cytoplasmic side of the membrane; it reads EKRETN. A helical transmembrane segment spans residues 203 to 223; that stretch reads FMAALPIGISLFMAHMALTGY. At 224–247 the chain is on the extracellular side; it reads TGTGVNPARSLGAAVAARYFPHYH. An NPA 2 motif is present at residues 229–231; it reads NPA. Residues 248–268 form a helical membrane-spanning segment; the sequence is WIYWIGPLLGAFLAWSVWQLL. Over 269–289 the chain is Cytoplasmic; sequence QILDYTTYVNAEKAAGQKKED.

It belongs to the MIP/aquaporin (TC 1.A.8) family.

The protein localises to the endoplasmic reticulum membrane. The protein resides in the cell membrane. Its function is as follows. Water channel required to facilitate the transport of water across membranes. Involved in freeze tolerance, osmotolerance and cell flocculation in liquid cultures. Is non-functional in most laboratory strains. The protein is Aquaporin-2 (AQY2) of Saccharomyces cerevisiae (Baker's yeast).